A 299-amino-acid polypeptide reads, in one-letter code: tRNA dimethylallyltransferase (299 aa).

13–20 (GPTASGKT) contributes to the ATP binding site. Substrate is bound at residue 15–20 (TASGKT). The tract at residues 38–41 (DSRQ) is interaction with substrate tRNA.

This sequence belongs to the IPP transferase family. Monomer. Mg(2+) serves as cofactor.

The enzyme catalyses adenosine(37) in tRNA + dimethylallyl diphosphate = N(6)-dimethylallyladenosine(37) in tRNA + diphosphate. In terms of biological role, catalyzes the transfer of a dimethylallyl group onto the adenine at position 37 in tRNAs that read codons beginning with uridine, leading to the formation of N6-(dimethylallyl)adenosine (i(6)A). The sequence is that of tRNA dimethylallyltransferase from Prochlorococcus marinus (strain MIT 9301).